We begin with the raw amino-acid sequence, 844 residues long: DNA mismatch repair protein MutS (844 aa).

602-609 (GPNMSGKS) contributes to the ATP binding site.

The protein belongs to the DNA mismatch repair MutS family.

Its function is as follows. This protein is involved in the repair of mismatches in DNA. It is possible that it carries out the mismatch recognition step. This protein has a weak ATPase activity. The protein is DNA mismatch repair protein MutS of Streptococcus pneumoniae serotype 19F (strain G54).